The sequence spans 616 residues: Homeodomain-interacting protein kinase 4 (616 aa).

The 337-residue stretch at 11–347 folds into the Protein kinase domain; sequence YDIIEVLGKG…PSAALRHPFV (337 aa). ATP is bound by residues 17 to 25 and K40; that span reads LGKGTFGEV. D136 functions as the Proton acceptor in the catalytic mechanism. The segment at 485–616 is disordered; the sequence is RHKARKPPAG…SFLQHVTGHH (132 aa). The segment covering 496–511 has biased composition (polar residues); sequence KSDSNLSNLIRLSQVS. Position 511 is a phosphoserine (S511).

It belongs to the protein kinase superfamily. CMGC Ser/Thr protein kinase family. HIPK subfamily. Post-translationally, autophosphorylated.

Its subcellular location is the cytoplasm. The catalysed reaction is L-seryl-[protein] + ATP = O-phospho-L-seryl-[protein] + ADP + H(+). It catalyses the reaction L-threonyl-[protein] + ATP = O-phospho-L-threonyl-[protein] + ADP + H(+). In terms of biological role, protein kinase that phosphorylates TP53, and thus induces TP53 repression of BIRC5 promoter. May act as a corepressor of transcription factors (Potential). The polypeptide is Homeodomain-interacting protein kinase 4 (HIPK4) (Macaca fascicularis (Crab-eating macaque)).